A 319-amino-acid chain; its full sequence is Ribose-phosphate pyrophosphokinase (319 aa).

Residues 41-43 (DGE) and 100-101 (RQ) each bind ATP. Residues histidine 134 and aspartate 176 each coordinate Mg(2+). Residue lysine 199 is part of the active site. D-ribose 5-phosphate is bound by residues arginine 201, aspartate 225, and 229-233 (DTAGT).

Belongs to the ribose-phosphate pyrophosphokinase family. Class I subfamily. Homohexamer. Mg(2+) is required as a cofactor.

The protein localises to the cytoplasm. The catalysed reaction is D-ribose 5-phosphate + ATP = 5-phospho-alpha-D-ribose 1-diphosphate + AMP + H(+). The protein operates within metabolic intermediate biosynthesis; 5-phospho-alpha-D-ribose 1-diphosphate biosynthesis; 5-phospho-alpha-D-ribose 1-diphosphate from D-ribose 5-phosphate (route I): step 1/1. Its function is as follows. Involved in the biosynthesis of the central metabolite phospho-alpha-D-ribosyl-1-pyrophosphate (PRPP) via the transfer of pyrophosphoryl group from ATP to 1-hydroxyl of ribose-5-phosphate (Rib-5-P). In Clostridium perfringens (strain 13 / Type A), this protein is Ribose-phosphate pyrophosphokinase.